Here is a 571-residue protein sequence, read N- to C-terminus: Proline--tRNA ligase (571 aa).

It belongs to the class-II aminoacyl-tRNA synthetase family. ProS type 1 subfamily. Homodimer.

Its subcellular location is the cytoplasm. It catalyses the reaction tRNA(Pro) + L-proline + ATP = L-prolyl-tRNA(Pro) + AMP + diphosphate. Its function is as follows. Catalyzes the attachment of proline to tRNA(Pro) in a two-step reaction: proline is first activated by ATP to form Pro-AMP and then transferred to the acceptor end of tRNA(Pro). As ProRS can inadvertently accommodate and process non-cognate amino acids such as alanine and cysteine, to avoid such errors it has two additional distinct editing activities against alanine. One activity is designated as 'pretransfer' editing and involves the tRNA(Pro)-independent hydrolysis of activated Ala-AMP. The other activity is designated 'posttransfer' editing and involves deacylation of mischarged Ala-tRNA(Pro). The misacylated Cys-tRNA(Pro) is not edited by ProRS. The sequence is that of Proline--tRNA ligase from Pseudomonas putida (strain ATCC 47054 / DSM 6125 / CFBP 8728 / NCIMB 11950 / KT2440).